The primary structure comprises 71 residues: Conotoxin ba5b (71 aa).

Positions 1-19 (MLCLPVFITLLLLVSPSAA) are cleaved as a signal peptide. Positions 20–52 (LPVESELQRDLTQDSPKDFRIREPLLLSKMFDR) are excised as a propeptide. Cystine bridges form between Cys54-Cys63 and Cys55-Cys64. Cys64 is modified (cysteine amide). The propeptide occupies 66-71 (RYQRGS).

Belongs to the conotoxin T superfamily. Expressed by the venom duct.

It is found in the secreted. In Conus bayani (Bayan's cone), this protein is Conotoxin ba5b.